Consider the following 1153-residue polypeptide: Cingulin (1153 aa).

Residues 1–342 (MAEPRGPVDH…LVMTTGSAKV (342 aa)) are head. Positions 17–37 (ITEPAGDAQMRTGRRPAKDAR) are disordered. The ZIM motif lies at 38 to 52 (ANTYGVAVRVQGIAG). Positions 44-57 (AVRVQGIAGQPFVV) are interaction with TJP1/ZO1. Phosphoserine is present on residues Ser-86, Ser-126, Ser-128, Ser-131, Ser-146, Ser-205, Ser-208, and Ser-324. Disordered stretches follow at residues 131–151 (SLLGPAPLGPGHRSTSLLELG) and 177–253 (DRHQ…SRAR). The span at 207-220 (DSRHLRDPPEDRRS) shows a compositional bias: basic and acidic residues. The stretch at 343-1110 (LAGQGELAQK…ALEKDSWRKA (768 aa)) forms a coiled coil. Lys-562 bears the N6-acetyllysine mark. Disordered stretches follow at residues 755 to 796 (AQRG…QKRL), 823 to 861 (QSQLEDYKEKSRREVADAQRQAKEWASEAEKSSGGLSRL), and 1110 to 1131 (AARSAAESSLQQEGLSSDEEFD). Basic and acidic residues-rich tracts occupy residues 772–796 (ALEEEGKQREALRRGKAELEEQKRL) and 827–853 (EDYKEKSRREVADAQRQAKEWASEAEK). The segment at 1111–1153 (ARSAAESSLQQEGLSSDEEFDGVYNPNSIASLLTESGLQTSSC) is tail. A compositionally biased stretch (polar residues) spans 1115–1124 (AESSLQQEGL). 2 positions are modified to phosphoserine: Ser-1125 and Ser-1126.

The protein belongs to the cingulin family. Homodimer. Interacts with TJP1/ZO1 and SPEF1.

The protein resides in the cell junction. The protein localises to the tight junction. Functionally, probably plays a role in the formation and regulation of the tight junction (TJ) paracellular permeability barrier. The sequence is that of Cingulin from Sorex araneus (Eurasian common shrew).